The following is a 294-amino-acid chain: UPF0761 membrane protein YPTB0027 (294 aa).

Helical transmembrane passes span 44 to 64 (LLSL…FPMF), 67 to 87 (ISIK…GDII), 108 to 128 (GLIV…NIIW), 136 to 156 (LVFS…LVGA), 185 to 205 (VFPL…VPTV), 212 to 232 (ALIG…GFAM), and 246 to 266 (VLAV…IVLL).

Belongs to the UPF0761 family.

Its subcellular location is the cell inner membrane. The sequence is that of UPF0761 membrane protein YPTB0027 from Yersinia pseudotuberculosis serotype I (strain IP32953).